The sequence spans 367 residues: Protein-glutamate methylesterase/protein-glutamine glutaminase (367 aa).

A Response regulatory domain is found at 6-123 (RVLVVDDSAF…SLGIKQLADE (118 aa)). A 4-aspartylphosphate modification is found at Asp-57. The 197-residue stretch at 165-361 (ISKKEIVVVI…DILLKKVNEY (197 aa)) folds into the CheB-type methylesterase domain. Active-site residues include Ser-177, His-204, and Asp-303.

The protein belongs to the CheB family. In terms of processing, phosphorylated by CheA. Phosphorylation of the N-terminal regulatory domain activates the methylesterase activity.

The protein localises to the cytoplasm. The catalysed reaction is [protein]-L-glutamate 5-O-methyl ester + H2O = L-glutamyl-[protein] + methanol + H(+). It catalyses the reaction L-glutaminyl-[protein] + H2O = L-glutamyl-[protein] + NH4(+). Its function is as follows. Involved in chemotaxis. Part of a chemotaxis signal transduction system that modulates chemotaxis in response to various stimuli. Catalyzes the demethylation of specific methylglutamate residues introduced into the chemoreceptors (methyl-accepting chemotaxis proteins or MCP) by CheR. Also mediates the irreversible deamidation of specific glutamine residues to glutamic acid. The protein is Protein-glutamate methylesterase/protein-glutamine glutaminase of Caldanaerobacter subterraneus subsp. tengcongensis (strain DSM 15242 / JCM 11007 / NBRC 100824 / MB4) (Thermoanaerobacter tengcongensis).